The following is a 162-amino-acid chain: Mitochondrial intermembrane space import and assembly protein 40 homolog (162 aa).

The disordered stretch occupies residues 1-61; the sequence is MGQAQSDENS…DNENESLEAK (61 aa). Residues 9–18 are compositionally biased toward low complexity; sequence NSIPTTTTTN. Cystine bridges form between Cys68-Cys70, Cys79-Cys112, and Cys89-Cys102. The CHCH domain occupies 76–120; it reads NGSCGSQFSEAFLCFLKSTAEEKGSDCVNPFVALQSCINANPDAF. Short sequence motifs (cx9C motif) lie at residues 79 to 89 and 102 to 112; these read CGSQFSEAFLC and CVNPFVALQSC. The interval 119 to 162 is disordered; that stretch reads AFSKSVTGDEKETEKKEEQPPVQDHRIIPPLWAKDPPRSGNSKL. Residues 125–145 are compositionally biased toward basic and acidic residues; sequence TGDEKETEKKEEQPPVQDHRI.

The protein localises to the mitochondrion intermembrane space. It localises to the peroxisome matrix. Its function is as follows. Required for the import and folding of small cysteine-containing proteins in the mitochondrial intermembrane space. Involved in the mitochondrial oxidative folding of the copper-zinc superoxide dismutase CSD1, the copper chaperone for superoxide dismutase CCS, and subunits of the mitochondrial membrane respiratory chain NADH dehydrogenase (Complex I). Involved in the peroxisomal oxidative folding of the copper-zinc superoxide dismutase CSD3, and the fatty acid beta-oxidation multifunctional protein AIM1. The protein is Mitochondrial intermembrane space import and assembly protein 40 homolog of Arabidopsis thaliana (Mouse-ear cress).